The chain runs to 331 residues: 6-phosphogluconolactonase (331 aa).

It belongs to the cycloisomerase 2 family.

It carries out the reaction 6-phospho-D-glucono-1,5-lactone + H2O = 6-phospho-D-gluconate + H(+). It participates in carbohydrate degradation; pentose phosphate pathway; D-ribulose 5-phosphate from D-glucose 6-phosphate (oxidative stage): step 2/3. Its function is as follows. Catalyzes the hydrolysis of 6-phosphogluconolactone to 6-phosphogluconate. This chain is 6-phosphogluconolactonase, found in Salmonella gallinarum (strain 287/91 / NCTC 13346).